A 401-amino-acid chain; its full sequence is MAKLTVEDLDLAGKKVLMRVDFNVPIKDGVVGDDNRIVAALPTIKYVLDHQGKAILFSHLGRIKKEDDKPGLSMRPVAERLSNLLNMPVTFVPVTEGPQLEDAIAKMEDGQVLVVQNTRYEDVKDGEYVKRESGNDPELGKYWASLGDLFINDAFGTAHRKHASNVGIASNMPGKAAAGFLMEKEIKFLGDAVTNPVRPFVAILGGAKVSDKIGVINNLLDKADKVIVGGGMTYTFYAAKGIKIGNSLVEEDKIDVAKEILEKAGDKLVLPVDNVVADKFANDANTKVVEGDIDDGWMALDIGPKSIEEFKKVLADAKTVVWNGPMGVFEMSNFAKGTLEVGQFLGTLEGATTIVGGGDSTAAAKQLGISDKLTHISTGGGASLAYLEGDVLPGIAAISDK.

Substrate is bound by residues D21–N23, R36, H59–R62, R119, and R160. ATP-binding positions include K212, E330, and G357 to S360.

This sequence belongs to the phosphoglycerate kinase family. As to quaternary structure, monomer.

It is found in the cytoplasm. It catalyses the reaction (2R)-3-phosphoglycerate + ATP = (2R)-3-phospho-glyceroyl phosphate + ADP. It participates in carbohydrate degradation; glycolysis; pyruvate from D-glyceraldehyde 3-phosphate: step 2/5. This Limosilactobacillus fermentum (strain NBRC 3956 / LMG 18251) (Lactobacillus fermentum) protein is Phosphoglycerate kinase.